The primary structure comprises 73 residues: Toxin Td7 (73 aa).

A signal peptide spans 1-7; sequence IGMAVEC. One can recognise an LCN-type CS-alpha/beta domain in the interval 8–70; it reads KDGYLVGADG…VWDSATNRCG (63 aa). 4 cysteine pairs are disulfide-bonded: cysteine 18/cysteine 69, cysteine 22/cysteine 44, cysteine 30/cysteine 50, and cysteine 34/cysteine 52. Lysine 71 is subject to Lysine amide.

The protein belongs to the long (4 C-C) scorpion toxin superfamily. Sodium channel inhibitor family. Beta subfamily. Expressed by the venom gland.

The protein localises to the secreted. Its function is as follows. Beta toxins bind voltage-independently at site-4 of sodium channels (Nav) and shift the voltage of activation toward more negative potentials thereby affecting sodium channel activation and promoting spontaneous and repetitive firing. The protein is Toxin Td7 of Tityus discrepans (Venezuelan scorpion).